Here is a 106-residue protein sequence, read N- to C-terminus: UPF0145 protein CPE0882 (106 aa).

It belongs to the UPF0145 family.

In Clostridium perfringens (strain 13 / Type A), this protein is UPF0145 protein CPE0882.